The primary structure comprises 313 residues: Porphobilinogen deaminase (313 aa).

Cys-241 carries the S-(dipyrrolylmethanemethyl)cysteine modification.

The protein belongs to the HMBS family. Monomer. The cofactor is dipyrromethane.

It carries out the reaction 4 porphobilinogen + H2O = hydroxymethylbilane + 4 NH4(+). Its pathway is porphyrin-containing compound metabolism; protoporphyrin-IX biosynthesis; coproporphyrinogen-III from 5-aminolevulinate: step 2/4. It participates in porphyrin-containing compound metabolism; chlorophyll biosynthesis. Tetrapolymerization of the monopyrrole PBG into the hydroxymethylbilane pre-uroporphyrinogen in several discrete steps. The polypeptide is Porphobilinogen deaminase (Chlorobium chlorochromatii (strain CaD3)).